The sequence spans 582 residues: MRPRIRDVSDKLRPNRASFDDGETKFHRKHLPPLRTMFGRWRKWTVLVAAIWIQASTGTNFDFSAYSSHLKSVLGISQVRLNYLAVASDLGKAFGWSSGIALGYFPLSVVLFAAAAMGFVGYGVQWLVITNIITLPYSLVFLCCLLAGLSICWFNTACFILCIRHFPNNRALALSLTVSFNGISAALYSLAFNAINPSSSNLYLLLNSLVPLVVSFAALYPVLTKPSLDTTPDYDSRRHDSHVFTILNVLAVITSFHLLLSSSSTSSARLNFIGAVVLLVFPLCAPLLVYARDYFLPVINARLNHESSGYVMLNIDELKNQKTSVSSKTGYEHMGTAKEGNTVRLGDEHSFRLLISRLEFWLYYIAYFCGGTIGLVYSNNLGQIAQSLGQNSTTLVTIYSSFSFFGRLLSAAPDFMHKRFRLTRTGWFAIALLPTPIAFFLLAVSSSQQTALQTATALIGLSSGFIFAAAVSITSDLFGPNSVGVNHNILITNIPIGSLLYGYIAASIYEANASPDITPIVSDSIVCIGRDCYFKTFVFWGCLSILGVVSSLSLYIRTKPVYHRLEQDKVSLTSSYKDLDPL.

The segment at Met1 to Asp20 is disordered. Helical transmembrane passes span Val46–Tyr66, Ile100–Val120, Ile132–Cys152, Leu172–Phe192, Leu202–Val222, Val243–Ser263, Leu270–Tyr290, and Leu358–Ser378. A glycan (N-linked (GlcNAc...) asparagine) is linked at Asn391. A run of 5 helical transmembrane segments spans residues Leu395–Ala412, Thr425–Ser445, Leu458–Phe478, Ile489–Tyr509, and Thr536–Ile556.

It localises to the membrane. In terms of biological role, required for karyogamy during female gametophyte development, when the two polar nuclei fuse to form the diploid central cell nucleus. The chain is Protein NUCLEAR FUSION DEFECTIVE 4 from Arabidopsis thaliana (Mouse-ear cress).